Here is a 249-residue protein sequence, read N- to C-terminus: Basigin (249 aa).

The Ig-like C2-type domain occupies 1–82 (AAGTIQTSVN…VGRSNIVVEG (82 aa)). Residues 1-187 (AAGTIQTSVN…MTLRVRSRLA (187 aa)) lie on the Extracellular side of the membrane. Cystine bridges form between C20-C66 and C105-C165. 3 N-linked (GlcNAc...) asparagine glycosylation sites follow: N23, N132, and N166. The Ig-like V-type domain occupies 84–179 (PRIKVGKKSE…TQGSVQEIMT (96 aa)). Residues 188-208 (ALWPFLGIVAEVLVLVTIIFI) form a helical membrane-spanning segment. The Cytoplasmic portion of the chain corresponds to 209–249 (YEKRRKPDQTLDEDDPGAAPLKGSGHHMNDKDKNVRQRNAT). The interval 216–249 (DQTLDEDDPGAAPLKGSGHHMNDKDKNVRQRNAT) is disordered. T218 carries the phosphothreonine modification. S232 carries the post-translational modification Phosphoserine.

In terms of assembly, homooligomer. Interacts with VEGFA, KDR/VEGFR2, PPIA/CYPA, SLC16A12, SLC16A11, ATP1B2, MAG, L1CAM and AJAP1. Interacts with SLC16A3; interaction mediates SLC16A3 targeting to the plasma membrane. Interacts with SLC16A1; interaction mediates SLC16A1 targeting to the plasma membrane. Interacts with PPIL2; regulates BSG transport to the cell membrane. Interacts with XKR8; promoting its localization at the cell membrane. Interacts with SLC16A6; this interaction mediates targeting to the plasma membrane.

The protein localises to the cell membrane. It localises to the endoplasmic reticulum membrane. Its subcellular location is the basolateral cell membrane. Its function is as follows. Signaling receptor for cyclophilins, essential for PPIA/CYPA and PPIB/CYPB-dependent signaling related to chemotaxis and adhesion of immune cells. Plays an important role in targeting the monocarboxylate transporters SLC16A1/GLUT1, SLC16A3, SLC16A8, SLC16A11 and SLC16A12 to the plasma membrane. Acts as a coreceptor for vascular endothelial growth factor receptor 2 (KDR/VEGFR2) in endothelial cells enhancing its VEGFA-mediated activation and downstream signaling. Promotes angiogenesis through EPAS1/HIF2A-mediated up-regulation of VEGFA and KDR/VEGFR2 in endothelial cells. This Cricetulus griseus (Chinese hamster) protein is Basigin (BSG).